The primary structure comprises 477 residues: Ribulose bisphosphate carboxylase large chain (477 aa).

Residues 1–2 (MS) constitute a propeptide that is removed on maturation. Residue proline 3 is modified to N-acetylproline. The substrate site is built by asparagine 123 and threonine 173. Residue lysine 175 is the Proton acceptor of the active site. Substrate is bound at residue lysine 177. Mg(2+)-binding residues include lysine 201, aspartate 203, and glutamate 204. Position 201 is an N6-carboxylysine (lysine 201). Residue histidine 294 is the Proton acceptor of the active site. Substrate is bound by residues arginine 295, histidine 327, and serine 379.

This sequence belongs to the RuBisCO large chain family. Type I subfamily. In terms of assembly, heterohexadecamer of 8 large chains and 8 small chains; disulfide-linked. The disulfide link is formed within the large subunit homodimers. Mg(2+) is required as a cofactor. Post-translationally, the disulfide bond which can form in the large chain dimeric partners within the hexadecamer appears to be associated with oxidative stress and protein turnover.

The protein localises to the plastid. The protein resides in the chloroplast. It catalyses the reaction 2 (2R)-3-phosphoglycerate + 2 H(+) = D-ribulose 1,5-bisphosphate + CO2 + H2O. It carries out the reaction D-ribulose 1,5-bisphosphate + O2 = 2-phosphoglycolate + (2R)-3-phosphoglycerate + 2 H(+). In terms of biological role, ruBisCO catalyzes two reactions: the carboxylation of D-ribulose 1,5-bisphosphate, the primary event in carbon dioxide fixation, as well as the oxidative fragmentation of the pentose substrate in the photorespiration process. Both reactions occur simultaneously and in competition at the same active site. The protein is Ribulose bisphosphate carboxylase large chain of Lolium perenne (Perennial ryegrass).